A 947-amino-acid polypeptide reads, in one-letter code: Serine/threonine-protein kinase PKH2 (947 aa).

A compositionally biased stretch (basic residues) spans 1-14; sequence MHKFRYSLHQHYSK. Disordered regions lie at residues 1-43, 108-132, and 162-212; these read MHKF…SSSS, SLGNTTNETGESIAKSAPGTPLSSH, and FNHL…NEEN. Positions 108-117 are enriched in polar residues; sequence SLGNTTNETG. A compositionally biased stretch (acidic residues) spans 187–198; that stretch reads NTEEEENNDDTD. Residues 199-212 show a composition bias toward basic and acidic residues; that stretch reads EIPKSETLKQNEEN. In terms of domain architecture, Protein kinase spans 240 to 502; it reads FKFGKELGEG…IPEIQKHYFF (263 aa). ATP-binding positions include 250 to 252 and Lys-269; that span reads SYS. A PIF-pocket region spans residues 271–316; sequence LDKRHIIKEKKVKYVNIEKHALNRLSNRLGVISLYFTFQDKDSLYF. ATP contacts are provided by residues 319–321 and Glu-325; that span reads DYA. Catalysis depends on Asp-364, which acts as the Proton acceptor. The ATP site is built by Glu-368 and Asp-382. Composition is skewed to low complexity over residues 550–579 and 618–632; these read VKKSTNSNSNTNNVATAVGGSSSNGHKGSS and SSTSEDSSKRSSNSN. 4 disordered regions span residues 550 to 598, 611 to 644, 660 to 686, and 794 to 816; these read VKKS…STEK, KPATNQNSSTSEDSSKRSSNSNETRKLSYSQQDY, SVGSYVKTTPSKDRKTLTKVPSNIHQQ, and NMKRSPTSDSKKSMDIERSASTS. Positions 802–811 are enriched in basic and acidic residues; that stretch reads DSKKSMDIER.

Belongs to the protein kinase superfamily. AGC Ser/Thr protein kinase family. PDPK1 subfamily.

The protein localises to the nucleus. It is found in the cytoplasm. It localises to the cell cortex. The catalysed reaction is L-seryl-[protein] + ATP = O-phospho-L-seryl-[protein] + ADP + H(+). It carries out the reaction L-threonyl-[protein] + ATP = O-phospho-L-threonyl-[protein] + ADP + H(+). Functionally, serine/threonine-protein kinase which is part sphingolipid-mediated signaling pathway that is required for the internalization step of endocytosis by regulating eisosome assembly and organization, and modulating the organization of the plasma membrane. Phosphorylates and activates PKC1. Activates YPK1 and YPK2, 2 components of signaling cascade required for maintenance of cell wall integrity. Required for stress-induced P-body assembly and regulates global mRNA decay at the deadenylation step. In Candida albicans (strain SC5314 / ATCC MYA-2876) (Yeast), this protein is Serine/threonine-protein kinase PKH2.